A 213-amino-acid polypeptide reads, in one-letter code: MRQGFPYARPGQVIGLFGGSFDPPHAGHVHVTREALKMFGLDRVWWLVTPGNPLKAHGPAPLDRRMEAARAMMRHPRVDVTDIEAHLGTRVTADTIAALRRIYPRVRFVWLMGADNLAQLHRWKDWRQIIETVPVGVLARPGDRISARMSPAARAYAPYRIDGQARHLLGRAEAPAWCFVNVPMVDVSSTRIRAAGGWSAAQQGRGQTGTQDQ.

The protein belongs to the NadD family.

The catalysed reaction is nicotinate beta-D-ribonucleotide + ATP + H(+) = deamido-NAD(+) + diphosphate. It participates in cofactor biosynthesis; NAD(+) biosynthesis; deamido-NAD(+) from nicotinate D-ribonucleotide: step 1/1. In terms of biological role, catalyzes the reversible adenylation of nicotinate mononucleotide (NaMN) to nicotinic acid adenine dinucleotide (NaAD). The chain is Probable nicotinate-nucleotide adenylyltransferase from Ruegeria pomeroyi (strain ATCC 700808 / DSM 15171 / DSS-3) (Silicibacter pomeroyi).